Reading from the N-terminus, the 351-residue chain is Peptide chain release factor 1 (351 aa).

Position 229 is an N5-methylglutamine (glutamine 229).

The protein belongs to the prokaryotic/mitochondrial release factor family. Post-translationally, methylated by PrmC. Methylation increases the termination efficiency of RF1.

It localises to the cytoplasm. Functionally, peptide chain release factor 1 directs the termination of translation in response to the peptide chain termination codons UAG and UAA. This Ruegeria pomeroyi (strain ATCC 700808 / DSM 15171 / DSS-3) (Silicibacter pomeroyi) protein is Peptide chain release factor 1.